The sequence spans 387 residues: WD repeat-containing protein 89 (387 aa).

WD repeat units lie at residues 21 to 65 (KEPT…VLRE), 68 to 107 (GYPG…EKPV), 112 to 156 (GYPS…QNLS), 168 to 208 (THSD…EEDA), 214 to 254 (NSIS…TDEP), and 319 to 358 (GHAA…KTFT).

The polypeptide is WD repeat-containing protein 89 (WDR89) (Homo sapiens (Human)).